The chain runs to 326 residues: Nine-heme cytochrome c (326 aa).

A signal peptide spans 1-30 (MRNGTSLLLLAAIALAGAACLTAMGGTAKA). The heme site is built by H67, H70, C77, C80, H81, H82, C89, C92, H93, H111, C127, C130, H131, C141, C144, H145, C157, C160, H161, H227, H230, H248, C255, C258, H259, H260, C271, C274, H275, H294, C297, C300, H301, C314, C317, and H318.

Monomer. Post-translationally, binds 9 heme groups per subunit.

It is found in the periplasm. Functionally, may form part of a transmembrane redox complex through which electrons are transferred to the cytoplasm for reduction of sulfate. The protein is Nine-heme cytochrome c of Desulfovibrio desulfuricans (strain ATCC 27774 / DSM 6949 / MB).